The chain runs to 380 residues: Cyclohexane-1-carbonyl-CoA dehydrogenase (380 aa).

This sequence belongs to the acyl-CoA dehydrogenase family. Homotetramer. Requires FAD as cofactor.

It catalyses the reaction cyclohexane-1-carbonyl-CoA + oxidized [electron-transfer flavoprotein] + H(+) = cyclohex-1-ene-1-carbonyl-CoA + reduced [electron-transfer flavoprotein]. Its function is as follows. Acyl-CoA dehydrogenase involved in the anaerobic degradation of cyclohexane carboxylic acid (CHC). Catalyzes the 1,2-dehydrogenation of cyclohexane-1-carbonyl-CoA (CHCoA) to cyclohex-1-ene-1-carbonyl-CoA (CHeneCoA). An alternative substrate, cyclohex-3-ene-1-carboxyl-CoA can be converted to the corresponding cyclohexadiene-1-carboxyl-CoA isomers (30% rate compared to CHC). This Geobacter metallireducens (strain ATCC 53774 / DSM 7210 / GS-15) protein is Cyclohexane-1-carbonyl-CoA dehydrogenase.